The primary structure comprises 407 residues: Phosphopentomutase (407 aa).

Asp10, Asp306, His311, Asp347, His348, and His359 together coordinate Mn(2+).

This sequence belongs to the phosphopentomutase family. Mn(2+) serves as cofactor.

The protein localises to the cytoplasm. It catalyses the reaction 2-deoxy-alpha-D-ribose 1-phosphate = 2-deoxy-D-ribose 5-phosphate. The enzyme catalyses alpha-D-ribose 1-phosphate = D-ribose 5-phosphate. Its pathway is carbohydrate degradation; 2-deoxy-D-ribose 1-phosphate degradation; D-glyceraldehyde 3-phosphate and acetaldehyde from 2-deoxy-alpha-D-ribose 1-phosphate: step 1/2. In terms of biological role, isomerase that catalyzes the conversion of deoxy-ribose 1-phosphate (dRib-1-P) and ribose 1-phosphate (Rib-1-P) to deoxy-ribose 5-phosphate (dRib-5-P) and ribose 5-phosphate (Rib-5-P), respectively. In Serratia proteamaculans (strain 568), this protein is Phosphopentomutase.